The primary structure comprises 793 residues: Peroxidase-like protein (793 aa).

A signal peptide spans 1-20 (MNLFICHVFLLLLHGYLIIC).

It belongs to the peroxidase family. In terms of tissue distribution, prismatic layer of shell (at protein level). Expressed primarily in the mantle with highest level in the mantle edge and lower level in the mantle pallium.

The protein localises to the secreted. This chain is Peroxidase-like protein, found in Margaritifera margaritifera (Freshwater pearl mussel).